The chain runs to 2293 residues: MKRHQFKSWIFELREILREIKNSHYFLDSWTKFDSVGSFTHIFFHQERFIKLFDPRIWSILLSRDSQGSTSNRYFTIKGVVLLVVAVLLYRINNRNMVERKNLYLMGLLPIPMNSIGPRNDTLEESFGSSNINRLIVSLLYLPKGKKISESCFMDPKESTWVLPITKKCIMPESNWGSRWWRNRIGKKRDSSCKISNETVARIEVSFKEKDIKYLEFLFVSYTDDPIRKDHDWELFDRLSPRKKRNIINLNSGQLFEILVKHWICYLMSAFREKRPIEVEGFFKQQGAESTIQSNDIEHVSHLFSRNKWGISLQNCAQFHMWQFRQDLFVSWGKNPHESDFLRNVSRENWIWLDNVWLVNKDRFFSKVRNVSSNIQYDSTRSIFVQVTDSSQLKGSSDQSRDRFDSISNSNEDLEYHTLINQREIQQLKERSILWDPSFLQTERTEIESERFPKCLSGYSSMSRLFTEREKQMNNHLLPEEIEEFLGNPTRSIRSFFSDRWSELHLGSNPTERSTRDQKLLKKQQDVSFVPSRRSENKEMVDIFKIITYLQNTVSIHPISSDPGCDMVPKDEPDMDSSNKISFLNKNQFFDLFHLFHDRNRGGYTLHHDFESEERFQEMVDLFTLSITEPDLVYHKGFAFSIDSYGLDQKKFLNEVFNSRDESKKKSLLVLPPIFYEENESFYRRIRKKSVRISCGNDLEDPKPKRVVFASNNIMEAVNQDRLIRNLIQIQYSTYRYIRNVSNRFFLMNRSDRNFEYGIQRDQIGTDTLNHRTIMKYTINQHLSNLKKSQKKWFDPLISRTERSMNRDPDAYRYKWSNGSKNFQEHLEHFVSEQKSRFQVVFDRLRINQYSIDWSEVIDKQDLSKSLRFFLSKSLLFLSKSLLFLSKSLPFFFVSFGNIPIHRSEIHIYELKGPNDQLCNQLLESIGVQIVHLNKLKPFLLADHDTSQKSKFLINGGTISPFLFNKISKWMIDSFHTRNNRRKSFDNTDSYFSMISHDRDNWLNPVKPFHRSSLISSFYKANRLRFLNNPHHFWFYCNKRFPFYVEKARINNYDLTYGQFLNILFIRNKIFSLCVGKKKHAFLERDTISPIESQVSNIFIPNDFPQSGDETYNLYKSFHFPIRSDPFVRRAIYSIADISGTPLTEGQIVNFERTYCQPLSDMNLSDSEGKNLDQYLNFNSNMGLIHTLCSEKSLPSEKRKKRSLCLKKCVEKRQMYRTFQRDSAFSNLSKWNLFQTYMPWFLTSTGCKYLNFTLLDTFSDLLPILSSSQKFVSIFHDIMHGSDISWPIPQKKWCLPQWNLISEISSKCLHNLLLSEEMIHRNNESPVPLIWTHLRSPNAREFLYSILFLLLVAGYLVRTHLLFVSRASSELHTEFEKIKSLMIPSYMIELRKLLDRYPTSELNSFWLKNLFLVALQQLGDSLEEIRGSASGGNMLLGGGPAYGVKSIRSKKKYLNINLIDIIDLISIIPNPINRITFSRNTRHLSRTSKEIYSLIRKRKNVNGDWIDDKIESWVANSDSIDDEEREFLVQFSTLTTEKRMDQILLSLTHSDNLSKNDSGYQMIEQPGSIYLRYLVDIHKKYLMNYEFNRSCLAERRIFLAHYQTITYSQTSCGANSFYFPSHGKPFSLRLALSPSRGILVIGSIGTGRSYLVKYLATNSYVPFITVFPNKFLDDKPKGYLIDDIDIDDSDDIDDSDDIDDDLDTELLTMMNALTMDMTPKIDRFDITLQFELAKAMSPCIIWIPNIHDLYVNESNYLSLGLLVNYLSRDCERCSTRNILVIASTHIPQKVDPALIAPNKSNTCIKIRRLLIPQQRKHFFTLSYTRGFHLEKKIFHTNGFGSITMGSNARDLVALTNEALSISITQKKSIIDTNTIRSALHRQTWDLRSQVRSVQDHGILFYQIGRAVAQNVLLSNCPIDPISIYMKKKSCKEGDSYLYKWYFELGTSMKKLTILLYLLSCSAGSVAQDLWSLPGPDEKNGITSYGFVENDSDLVHGLLEVEGVLVGSSRTEKDCSQFDNDRVTLLLRSEPRNPLDMMQNGSCSIVDQRFLYEKYESEFEEGEGALDPQQIEEDLFNHIVWAPRIWRPCGNLFDCIERPNELGFPYWARSFRGKRIIYHKEDELQENDSEFLQSGTMQYQTRDRSSKEQGFFRISQFIWDPGGPFFFLFKDQPFVSVFSRREFFADEEMSKGLLTSQTNPPTSIYKRWFIKNTQEKHFELLIHRQRWLRTNSSLSNGSFRSNTPSESYQYLSNLFLSNGTLLDQMTKTLLRKRWLFPDEMKHLIHVTGERFPIP.

Residue 1642–1649 (GSIGTGRS) participates in ATP binding.

This sequence belongs to the Ycf2 family.

The protein resides in the plastid. It is found in the chloroplast stroma. Its function is as follows. Probable ATPase of unknown function. Its presence in a non-photosynthetic plant (Epifagus virginiana) and experiments in tobacco indicate that it has an essential function which is probably not related to photosynthesis. The chain is Protein Ycf2 from Platanus occidentalis (Sycamore).